Consider the following 349-residue polypeptide: Isopentenyl-diphosphate delta-isomerase (349 aa).

12 to 13 (RK) contributes to the substrate binding site. FMN-binding positions include 69 to 71 (GMT), S99, and N128. Q158 contributes to the substrate binding site. Mg(2+) is bound at residue E159. Residues K189, S214, T219, 265–267 (GIR), and 286–287 (SG) contribute to the FMN site.

The protein belongs to the IPP isomerase type 2 family. Homooctamer. Dimer of tetramers. It depends on FMN as a cofactor. Requires NADPH as cofactor. The cofactor is Mg(2+).

Its subcellular location is the cytoplasm. The catalysed reaction is isopentenyl diphosphate = dimethylallyl diphosphate. In terms of biological role, involved in the biosynthesis of isoprenoids. Catalyzes the 1,3-allylic rearrangement of the homoallylic substrate isopentenyl (IPP) to its allylic isomer, dimethylallyl diphosphate (DMAPP). In Latilactobacillus sakei subsp. sakei (strain 23K) (Lactobacillus sakei subsp. sakei), this protein is Isopentenyl-diphosphate delta-isomerase.